A 303-amino-acid chain; its full sequence is UDP-3-O-acyl-N-acetylglucosamine deacetylase (303 aa).

His78, His237, and Asp241 together coordinate Zn(2+). His264 serves as the catalytic Proton donor.

This sequence belongs to the LpxC family. The cofactor is Zn(2+).

The catalysed reaction is a UDP-3-O-[(3R)-3-hydroxyacyl]-N-acetyl-alpha-D-glucosamine + H2O = a UDP-3-O-[(3R)-3-hydroxyacyl]-alpha-D-glucosamine + acetate. Its pathway is glycolipid biosynthesis; lipid IV(A) biosynthesis; lipid IV(A) from (3R)-3-hydroxytetradecanoyl-[acyl-carrier-protein] and UDP-N-acetyl-alpha-D-glucosamine: step 2/6. Catalyzes the hydrolysis of UDP-3-O-myristoyl-N-acetylglucosamine to form UDP-3-O-myristoylglucosamine and acetate, the committed step in lipid A biosynthesis. This chain is UDP-3-O-acyl-N-acetylglucosamine deacetylase, found in Pseudomonas aeruginosa (strain LESB58).